Reading from the N-terminus, the 363-residue chain is NAD(P)H-quinone oxidoreductase subunit 1, chloroplastic (363 aa).

The next 6 helical transmembrane spans lie at 27–47 (IWLF…VLVI), 98–118 (FSIG…VIPF), 127–147 (LSIG…GLLM), 248–268 (YSGI…LVSS), 300–320 (VFGT…FLFI), and 336–356 (LLNL…LLTT).

It belongs to the complex I subunit 1 family. As to quaternary structure, NDH is composed of at least 16 different subunits, 5 of which are encoded in the nucleus.

Its subcellular location is the plastid. It is found in the chloroplast thylakoid membrane. It catalyses the reaction a plastoquinone + NADH + (n+1) H(+)(in) = a plastoquinol + NAD(+) + n H(+)(out). The catalysed reaction is a plastoquinone + NADPH + (n+1) H(+)(in) = a plastoquinol + NADP(+) + n H(+)(out). Functionally, NDH shuttles electrons from NAD(P)H:plastoquinone, via FMN and iron-sulfur (Fe-S) centers, to quinones in the photosynthetic chain and possibly in a chloroplast respiratory chain. The immediate electron acceptor for the enzyme in this species is believed to be plastoquinone. Couples the redox reaction to proton translocation, and thus conserves the redox energy in a proton gradient. This chain is NAD(P)H-quinone oxidoreductase subunit 1, chloroplastic, found in Amborella trichopoda.